Here is a 407-residue protein sequence, read N- to C-terminus: Argininosuccinate synthase (407 aa).

Residues 16–24 (AYSGGLDTS) and A44 each bind ATP. Positions 96 and 101 each coordinate L-citrulline. ATP is bound at residue G126. Residues T128, N132, and D133 each coordinate L-aspartate. N132 contacts L-citrulline. The L-citrulline site is built by R136, S185, S194, E270, and Y282.

It belongs to the argininosuccinate synthase family. Type 1 subfamily. As to quaternary structure, homotetramer.

It localises to the cytoplasm. The enzyme catalyses L-citrulline + L-aspartate + ATP = 2-(N(omega)-L-arginino)succinate + AMP + diphosphate + H(+). It functions in the pathway amino-acid biosynthesis; L-arginine biosynthesis; L-arginine from L-ornithine and carbamoyl phosphate: step 2/3. The polypeptide is Argininosuccinate synthase (Shewanella loihica (strain ATCC BAA-1088 / PV-4)).